A 267-amino-acid chain; its full sequence is 2-keto-3-deoxy-L-rhamnonate aldolase (267 aa).

His-49 functions as the Proton acceptor in the catalytic mechanism. Position 151 (Gln-151) interacts with substrate. Glu-153 contributes to the Mg(2+) binding site. Residues Ala-178 and Asp-179 each contribute to the substrate site. Position 179 (Asp-179) interacts with Mg(2+).

Belongs to the HpcH/HpaI aldolase family. KDR aldolase subfamily. As to quaternary structure, homohexamer. It depends on Mg(2+) as a cofactor.

It carries out the reaction 2-dehydro-3-deoxy-L-rhamnonate = (S)-lactaldehyde + pyruvate. Catalyzes the reversible retro-aldol cleavage of 2-keto-3-deoxy-L-rhamnonate (KDR) to pyruvate and lactaldehyde. This Salmonella dublin (strain CT_02021853) protein is 2-keto-3-deoxy-L-rhamnonate aldolase.